We begin with the raw amino-acid sequence, 128 residues long: S-adenosylmethionine decarboxylase proenzyme (128 aa).

The active-site Schiff-base intermediate with substrate; via pyruvic acid is the S61. S61 bears the Pyruvic acid (Ser); by autocatalysis mark. Catalysis depends on H66, which acts as the Proton acceptor; for processing activity. The active-site Proton donor; for catalytic activity is C81.

It belongs to the prokaryotic AdoMetDC family. Type 1 subfamily. As to quaternary structure, heterotetramer of two alpha and two beta chains arranged as a dimer of alpha/beta heterodimers. It depends on pyruvate as a cofactor. Post-translationally, is synthesized initially as an inactive proenzyme. Formation of the active enzyme involves a self-maturation process in which the active site pyruvoyl group is generated from an internal serine residue via an autocatalytic post-translational modification. Two non-identical subunits are generated from the proenzyme in this reaction, and the pyruvate is formed at the N-terminus of the alpha chain, which is derived from the carboxyl end of the proenzyme. The post-translation cleavage follows an unusual pathway, termed non-hydrolytic serinolysis, in which the side chain hydroxyl group of the serine supplies its oxygen atom to form the C-terminus of the beta chain, while the remainder of the serine residue undergoes an oxidative deamination to produce ammonia and the pyruvoyl group blocking the N-terminus of the alpha chain.

The catalysed reaction is S-adenosyl-L-methionine + H(+) = S-adenosyl 3-(methylsulfanyl)propylamine + CO2. It functions in the pathway amine and polyamine biosynthesis; S-adenosylmethioninamine biosynthesis; S-adenosylmethioninamine from S-adenosyl-L-methionine: step 1/1. In terms of biological role, catalyzes the decarboxylation of S-adenosylmethionine to S-adenosylmethioninamine (dcAdoMet), the propylamine donor required for the synthesis of the polyamines spermine and spermidine from the diamine putrescine. The polypeptide is S-adenosylmethionine decarboxylase proenzyme (Synechococcus sp. (strain WH7803)).